Reading from the N-terminus, the 146-residue chain is Regulator of ribonuclease activity B (146 aa).

A disordered region spans residues 110–146 (WGTYFEDPDGEEEEGDEFDQDDEDGPADRDEVPATRH). Acidic residues predominate over residues 115 to 134 (EDPDGEEEEGDEFDQDDEDG). A compositionally biased stretch (basic and acidic residues) spans 135–146 (PADRDEVPATRH).

Belongs to the RraB family. Interacts with the C-terminal region of Rne.

The protein localises to the cytoplasm. Functionally, globally modulates RNA abundance by binding to RNase E (Rne) and regulating its endonucleolytic activity. Can modulate Rne action in a substrate-dependent manner by altering the composition of the degradosome. This is Regulator of ribonuclease activity B from Sodalis glossinidius (strain morsitans).